A 418-amino-acid polypeptide reads, in one-letter code: F420-non-reducing hydrogenase vhu subunit A (418 aa).

Residues C61 and C64 each coordinate Ni(2+).

This sequence belongs to the [NiFe]/[NiFeSe] hydrogenase large subunit family. The F420-non-reducing hydrogenase vhu is composed of four subunits; VhuA, VhuD, VhuG and VhuU. Ni(2+) serves as cofactor.

This chain is F420-non-reducing hydrogenase vhu subunit A (vhuA), found in Methanocaldococcus jannaschii (strain ATCC 43067 / DSM 2661 / JAL-1 / JCM 10045 / NBRC 100440) (Methanococcus jannaschii).